A 1956-amino-acid chain; its full sequence is Histone-lysine N-methyltransferase SETD1B (1956 aa).

The segment covering 1-20 has biased composition (basic and acidic residues); the sequence is MSFKEAKPGERGKNPEDHGR. Positions 1–46 are disordered; it reads MSFKEAKPGERGKNPEDHGRKQTASWINGMEAGNQPSTSGEKKSHH. Residues 111 to 199 form the RRM domain; it reads DEFYVGPVPP…NIIHVELDTK (89 aa). 9 disordered regions span residues 226 to 478, 502 to 637, 662 to 696, 926 to 1148, 1341 to 1386, 1420 to 1464, 1512 to 1553, 1627 to 1655, and 1766 to 1790; these read LDAS…LEAE, IAGD…VTPS, GFPP…VTVP, KEPP…DEMQ, EDLP…TLTS, PTFP…VPSP, HLTS…NYET, TKHK…FSPP, and IDTQ…RRSE. 3 stretches are compositionally biased toward polar residues: residues 254–290, 298–312, and 346–361; these read VTPN…QGTP, PFSQ…QTTP, and SSGS…NVTR. A compositionally biased stretch (pro residues) spans 363–373; the sequence is QPEPVQVPRTP. 3 stretches are compositionally biased toward polar residues: residues 375–407, 416–432, and 451–464; these read LSHS…PQTS, GPQT…NSAS, and DSTT…SQTP. Over residues 517–527 the composition is skewed to low complexity; the sequence is SPISSSSSQLS. 2 stretches are compositionally biased toward polar residues: residues 535–551 and 575–593; these read GSRY…SSTG and SLCQ…NQSG. Residues 594–605 show a composition bias toward basic and acidic residues; that stretch reads RKTESLDKKELV. A compositionally biased stretch (acidic residues) spans 625 to 634; sequence EDMEISDDEV. A compositionally biased stretch (acidic residues) spans 986-1000; that stretch reads SEGEEEVESEGDDGE. Residues 1001–1011 are compositionally biased toward basic and acidic residues; it reads TSDKEDSSSEK. Residues 1068 to 1122 show a composition bias toward acidic residues; that stretch reads DSSDESEESSEYESSSDSDEKEEEDDEEEELVFGDDQSEDQDLGQEYEVETDREE. The segment covering 1341–1352 has biased composition (basic and acidic residues); sequence EDLPRTPGRDIV. Composition is skewed to polar residues over residues 1358 to 1367 and 1450 to 1462; these read LGKSQSTETV and EPTS…NSVP. Positions 1541–1551 are enriched in basic and acidic residues; sequence SAHEFETEKNY. A compositionally biased stretch (basic residues) spans 1628 to 1638; it reads KHKKSRNSRHN. The segment covering 1769 to 1783 has biased composition (polar residues); that stretch reads QGKSIPAQPQASTRA. The RxxxRR motif signature appears at 1788–1793; sequence RSEQRR. Positions 1817-1934 constitute an SET domain; the sequence is KKLRFCKSHI…VNEEITYDYK (118 aa). Tyr1933 contributes to the S-adenosyl-L-methionine binding site. Residues 1940 to 1956 form the Post-SET domain; it reads VKIPCLCGAENCRGTLN.

It belongs to the class V-like SAM-binding methyltransferase superfamily. As to quaternary structure, component of the SET1B/COMPASS complex.

The protein resides in the nucleus speckle. The protein localises to the chromosome. It carries out the reaction L-lysyl(4)-[histone H3] + 3 S-adenosyl-L-methionine = N(6),N(6),N(6)-trimethyl-L-lysyl(4)-[histone H3] + 3 S-adenosyl-L-homocysteine + 3 H(+). In terms of biological role, histone methyltransferase that specifically methylates 'Lys-4' of histone H3, when part of the SET1 histone methyltransferase (HMT) complex, but not if the neighboring 'Lys-9' residue is already methylated. H3 'Lys-4' methylation represents a specific tag for epigenetic transcriptional activation. The protein is Histone-lysine N-methyltransferase SETD1B (setd1b) of Xenopus tropicalis (Western clawed frog).